Consider the following 180-residue polypeptide: MNPAPNLVMIGPMGAGKSSIGRRIAKHFNLHFADTDHAIVERAGTSISTIFKYSGEPEFRRLEREVLHDLLNHENRLIATGGGTILDPENRHRMQKRGFVVFLKINVNTQLERLAHDRYRPLLQQTDRKQVLSDLYATRQPLYQKIADMIVTTDHMSPNTATAQLILDLTAHWQKSSNTA.

Gly-14 to Ser-19 contributes to the ATP binding site. Residue Ser-18 participates in Mg(2+) binding. Asp-36, Arg-60, and Gly-82 together coordinate substrate. Residue Arg-120 coordinates ATP. Arg-139 contributes to the substrate binding site.

This sequence belongs to the shikimate kinase family. As to quaternary structure, monomer. Requires Mg(2+) as cofactor.

The protein localises to the cytoplasm. It carries out the reaction shikimate + ATP = 3-phosphoshikimate + ADP + H(+). It participates in metabolic intermediate biosynthesis; chorismate biosynthesis; chorismate from D-erythrose 4-phosphate and phosphoenolpyruvate: step 5/7. Functionally, catalyzes the specific phosphorylation of the 3-hydroxyl group of shikimic acid using ATP as a cosubstrate. This Xylella fastidiosa (strain M12) protein is Shikimate kinase.